The following is a 97-amino-acid chain: M-zodatoxin-Lt7a (97 aa).

Positions 1–22 (MKFYVVALALLVAFVCIAESRS) are cleaved as a signal peptide. The propeptide occupies 23 to 63 (VETERAVDADLEDDLDDLEEYLEGIAEALELEDFPDTEEAR). The Processing quadruplet motif motif lies at 60–63 (EEAR).

Post-translationally, cleavage of the propeptide depends on the processing quadruplet motif (XXXR, with at least one of X being E). In terms of tissue distribution, expressed by the venom gland.

The protein localises to the secreted. Functionally, does not have antimicrobial or antifungal activity. Does not have hemolytic activity against rabbit erythrocytes. However, it causes some conductance changes in planar bilayer membranes, without membrane rupture, suggesting a cytolytic function on other biological targets. It causes paralysis, but is not lethal when injected into insect (M.domestica) larvae. This is M-zodatoxin-Lt7a from Lachesana tarabaevi (Spider).